A 258-amino-acid chain; its full sequence is Imidazole glycerol phosphate synthase subunit HisF (258 aa).

Catalysis depends on residues aspartate 12 and aspartate 131.

It belongs to the HisA/HisF family. Heterodimer of HisH and HisF.

The protein localises to the cytoplasm. It carries out the reaction 5-[(5-phospho-1-deoxy-D-ribulos-1-ylimino)methylamino]-1-(5-phospho-beta-D-ribosyl)imidazole-4-carboxamide + L-glutamine = D-erythro-1-(imidazol-4-yl)glycerol 3-phosphate + 5-amino-1-(5-phospho-beta-D-ribosyl)imidazole-4-carboxamide + L-glutamate + H(+). It participates in amino-acid biosynthesis; L-histidine biosynthesis; L-histidine from 5-phospho-alpha-D-ribose 1-diphosphate: step 5/9. In terms of biological role, IGPS catalyzes the conversion of PRFAR and glutamine to IGP, AICAR and glutamate. The HisF subunit catalyzes the cyclization activity that produces IGP and AICAR from PRFAR using the ammonia provided by the HisH subunit. This chain is Imidazole glycerol phosphate synthase subunit HisF, found in Sinorhizobium fredii (strain NBRC 101917 / NGR234).